The chain runs to 128 residues: Protein Wnt-8 (128 aa).

Serine 1 carries O-palmitoleoyl serine lipidation. 2 disulfide bridges follow: cysteine 71/cysteine 109 and cysteine 87/cysteine 102. N-linked (GlcNAc...) asparagine glycosylation is found at asparagine 74 and asparagine 93.

Belongs to the Wnt family. Palmitoleoylation is required for efficient binding to frizzled receptors. Depalmitoleoylation leads to Wnt signaling pathway inhibition. Post-translationally, proteolytic processing by tiki1 and tiki2 promotes oxidation and formation of large disulfide-bond oligomers, leading to inactivation of wnt8.

It localises to the secreted. The protein resides in the extracellular space. The protein localises to the extracellular matrix. Functionally, ligand for members of the frizzled family of seven transmembrane receptors. Probable developmental protein. May be a signaling molecule which affects the development of discrete regions of tissues. Is likely to signal over only few cell diameters. This Thunnus thynnus (Atlantic bluefin tuna) protein is Protein Wnt-8 (wnt8).